An 843-amino-acid chain; its full sequence is Major vault protein alpha (843 aa).

At alanine 2 the chain carries N-acetylalanine. 9 MVP repeats span residues 2-56 (ADLN…IPQR), 57-111 (NYCT…KVTA), 112-163 (LQVV…EEIK), 164-216 (ATII…EIVN), 217-272 (AYVL…GEVH), 273-324 (ITTL…IHNI), 325-376 (YVLT…KRES), 377-442 (IPLD…STRV), and 443-505 (VTYR…FLGP). Residues 643–663 (QEAAARHEAERLEQGARGRLE) are disordered. Residues 646–663 (AARHEAERLEQGARGRLE) are compositionally biased toward basic and acidic residues.

The vault ribonucleoprotein particle is a huge (400 A x 670 A) cage structure of 12.9 MDa. It consists of a dimer of half-vaults, with each half-vault comprising 39 identical major vault protein (MVP) chains. Dictyostelium is one of the few organisms in which the major component is actually two proteins (alpha and beta).

Its subcellular location is the cytoplasm. The protein localises to the nucleus. Unknown, though MVP-alpha is required for normal vault structure. This Dictyostelium discoideum (Social amoeba) protein is Major vault protein alpha (mvpA).